Reading from the N-terminus, the 386-residue chain is Histidine decarboxylase (386 aa).

A substrate-binding site is contributed by histidine 120. Lysine 233 is subject to N6-(pyridoxal phosphate)lysine.

This sequence belongs to the group II decarboxylase family. In terms of assembly, homotetramer. Pyridoxal 5'-phosphate serves as cofactor.

It catalyses the reaction L-histidine + H(+) = histamine + CO2. The protein is Histidine decarboxylase of Vibrio campbellii (strain ATCC BAA-1116).